The chain runs to 490 residues: (21S)-21-acetyl-1-hydroxy-apo-melianone synthase CYP88A164 (490 aa).

Residues aspartate 4 to leucine 24 form a helical membrane-spanning segment. Cysteine 438 provides a ligand contact to heme.

The protein belongs to the cytochrome P450 family. It depends on heme as a cofactor. In terms of tissue distribution, mainly expressed in petioles and, to a lower extent, in roots.

It is found in the membrane. The enzyme catalyses (21S)-21-acetoxyl-apo-melianone + reduced [NADPH--hemoprotein reductase] + O2 = (21S)-21-acetyl-1-hydroxy-apo-melianone + oxidized [NADPH--hemoprotein reductase] + H2O + H(+). The protein operates within secondary metabolite biosynthesis; terpenoid biosynthesis. Functionally, monooxygenase involved in the biosynthesis of limonoids triterpene natural products such as azadirachtin, an antifeedant widely used as bioinsecticide, and possessing many medicinal applications including anti-tumoral, anti-malarial, anti-rheumatic, antibacterial, anti-inflammatory, anti-pyretic and diuretic effects. Catalyzes the conversion of (21S)-21-acetoxyl-apo-melianone to (21S)-21-acetyl-1-hydroxy-apo-melianone. The sequence is that of (21S)-21-acetyl-1-hydroxy-apo-melianone synthase CYP88A164 from Melia azedarach (Chinaberry tree).